The following is a 400-amino-acid chain: Tryptophan synthase beta chain (400 aa).

Lys-92 carries the N6-(pyridoxal phosphate)lysine modification.

The protein belongs to the TrpB family. As to quaternary structure, tetramer of two alpha and two beta chains. Requires pyridoxal 5'-phosphate as cofactor.

The catalysed reaction is (1S,2R)-1-C-(indol-3-yl)glycerol 3-phosphate + L-serine = D-glyceraldehyde 3-phosphate + L-tryptophan + H2O. The protein operates within amino-acid biosynthesis; L-tryptophan biosynthesis; L-tryptophan from chorismate: step 5/5. Functionally, the beta subunit is responsible for the synthesis of L-tryptophan from indole and L-serine. This is Tryptophan synthase beta chain from Chromobacterium violaceum (strain ATCC 12472 / DSM 30191 / JCM 1249 / CCUG 213 / NBRC 12614 / NCIMB 9131 / NCTC 9757 / MK).